Reading from the N-terminus, the 456-residue chain is Chromosomal replication initiator protein DnaA (456 aa).

The tract at residues 1–85 is domain I, interacts with DnaA modulators; the sequence is MDADLNKLWE…EIKFIIESDL (85 aa). The tract at residues 85–117 is domain II; it reads LNNEDELNNSDNSDKNRDKNSRRNIVVNDEMSS. A domain III, AAA+ region region spans residues 118–334; it reads TLNPKYTFNS…GALIRIIAYS (217 aa). Positions 162, 164, 165, and 166 each coordinate ATP. A domain IV, binds dsDNA region spans residues 335 to 456; sequence SLTNREVTVD…SDITKKVSQN (122 aa).

This sequence belongs to the DnaA family. In terms of assembly, oligomerizes as a right-handed, spiral filament on DNA at oriC.

It is found in the cytoplasm. Its function is as follows. Plays an essential role in the initiation and regulation of chromosomal replication. ATP-DnaA binds to the origin of replication (oriC) to initiate formation of the DNA replication initiation complex once per cell cycle. Binds the DnaA box (a 9 base pair repeat at the origin) and separates the double-stranded (ds)DNA. Forms a right-handed helical filament on oriC DNA; dsDNA binds to the exterior of the filament while single-stranded (ss)DNA is stabiized in the filament's interior. The ATP-DnaA-oriC complex binds and stabilizes one strand of the AT-rich DNA unwinding element (DUE), permitting loading of DNA polymerase. After initiation quickly degrades to an ADP-DnaA complex that is not apt for DNA replication. Binds acidic phospholipids. The protein is Chromosomal replication initiator protein DnaA of Clostridium botulinum (strain Eklund 17B / Type B).